The following is a 567-amino-acid chain: Hexose transporter HXT11 (567 aa).

Over residues Met1–Ala22 the composition is skewed to polar residues. The segment at Met1–Glu45 is disordered. Topologically, residues Met1 to Ser56 are cytoplasmic. Residues Ala57–Trp77 form a helical membrane-spanning segment. Topologically, residues Asp78–Gly112 are extracellular. An N-linked (GlcNAc...) asparagine glycan is attached at Asn87. Residues Leu113–Gly133 form a helical membrane-spanning segment. Topologically, residues Asp134–Arg139 are cytoplasmic. A helical transmembrane segment spans residues Ile140 to Ile160. Residues Asn161–Arg170 lie on the Extracellular side of the membrane. A helical membrane pass occupies residues Ile171–Val191. Topologically, residues Ala192–Arg197 are cytoplasmic. The chain crosses the membrane as a helical span at residues Gly198 to Thr218. Residues Asn219–Arg232 lie on the Extracellular side of the membrane. Asn227 is a glycosylation site (N-linked (GlcNAc...) asparagine). A helical membrane pass occupies residues Val233 to Pro253. At Glu254–Asp336 the chain is on the cytoplasmic side. The chain crosses the membrane as a helical span at residues Asn337–Lys353. Topologically, residues Asp354 to Ser359 are extracellular. The chain crosses the membrane as a helical span at residues Ile360–Ile377. Residues Glu378–Thr384 lie on the Cytoplasmic side of the membrane. The chain crosses the membrane as a helical span at residues Cys385–Val405. Residues Thr406–Val429 lie on the Extracellular side of the membrane. Residues Phe430–Val450 traverse the membrane as a helical segment. Topologically, residues Ser451–Thr467 are cytoplasmic. A helical membrane pass occupies residues Ala468–Ile488. Position 489 (Asn489) is a topological domain, extracellular. A helical membrane pass occupies residues Phe490–Phe510. At Val511–Ser567 the chain is on the cytoplasmic side.

It belongs to the major facilitator superfamily. Sugar transporter (TC 2.A.1.1) family.

Its subcellular location is the membrane. Its function is as follows. Probable glucose transporter. This chain is Hexose transporter HXT11 (HXT11), found in Saccharomyces cerevisiae (strain ATCC 204508 / S288c) (Baker's yeast).